The following is a 181-amino-acid chain: Probable pyruvoyl-dependent arginine decarboxylase (181 aa).

Serine 43 carries the pyruvic acid (Ser) modification.

It belongs to the PdaD family. The cofactor is pyruvate.

It catalyses the reaction L-arginine + H(+) = agmatine + CO2. The polypeptide is Probable pyruvoyl-dependent arginine decarboxylase (Chlorobaculum parvum (strain DSM 263 / NCIMB 8327) (Chlorobium vibrioforme subsp. thiosulfatophilum)).